Consider the following 868-residue polypeptide: Metabotropic glutamate receptor 6 (868 aa).

The N-terminal stretch at 1 to 20 is a signal peptide; sequence MARLLLALLAWLAQMSPVRA. Topologically, residues 21–576 are extracellular; it reads AGSVRLAGGL…VVRLTWSSPW (556 aa). C48 and C90 form a disulfide bridge. L-glutamate is bound by residues S145, 166–168, and Y216; that span reads AST. Disulfide bonds link C235–C527, C358–C374, C414–C421, C509–C528, C513–C531, C534–C546, and C549–C562. Residue N287 is glycosylated (N-linked (GlcNAc...) asparagine). Position 298 (D298) interacts with L-glutamate. K391 is a binding site for L-glutamate. Residues N442 and N470 are each glycosylated (N-linked (GlcNAc...) asparagine). N558 carries an N-linked (GlcNAc...) asparagine glycan. The helical transmembrane segment at 577–599 threads the bilayer; it reads AAPPLLLAVLGIMATTTVVGTFV. The Cytoplasmic portion of the chain corresponds to 600–613; the sequence is RHNNTPIVRASGRE. The chain crosses the membrane as a helical span at residues 614–634; sequence LSYVLLTGIFLIYAVTFLMVA. Residues 635–645 are Extracellular-facing; the sequence is EPGAAVCATRR. A helical transmembrane segment spans residues 646–664; it reads LFLGLGTTLSYSALLTKTN. The Cytoplasmic portion of the chain corresponds to 665-688; that stretch reads RIYRIFEQGKRSVTPPPFISPTSQ. Residues 689–709 traverse the membrane as a helical segment; sequence LVITFSLTSLQVVGVIAWLGA. At 710 to 739 the chain is on the extracellular side; sequence QPPHSVIDYEEQRTVDPEQARGVLKCDMSD. A helical transmembrane segment spans residues 740–761; the sequence is LSLIGCLGYSLLLMVTCTVYAI. Residues 762-774 are Cytoplasmic-facing; the sequence is KARGVPETFNEAK. A helical transmembrane segment spans residues 775–797; that stretch reads PIGFTMYTTCIVWLAFVPIFFGT. Over 798–810 the chain is Extracellular; that stretch reads AQSAEKIYIQTTT. A helical membrane pass occupies residues 811 to 836; the sequence is LTVSLSLSASVSLGMLYVPKTYVILF. The Cytoplasmic segment spans residues 837 to 868; sequence HPEQNVQKRKRSLKTTSTVAAPPKGADTEDPK. Residues 845–868 are disordered; sequence RKRSLKTTSTVAAPPKGADTEDPK.

This sequence belongs to the G-protein coupled receptor 3 family. In terms of assembly, homodimer. Interacts with GPR179. Interacts with photoreceptor synaptic protein LRIT1 (via its N-terminal extracellular domain).

Its subcellular location is the cell membrane. It is found in the endoplasmic reticulum membrane. The protein resides in the golgi apparatus membrane. The protein localises to the cell projection. It localises to the dendrite. In terms of biological role, G-protein coupled receptor for glutamate. Ligand binding causes a conformation change that triggers signaling via guanine nucleotide-binding proteins (G proteins) and modulates the activity of down-stream effectors, such as adenylate cyclase. Signaling inhibits adenylate cyclase activity. Signaling stimulates TRPM1 channel activity and Ca(2+) uptake. Required for normal vision. This chain is Metabotropic glutamate receptor 6 (GRM6), found in Oryctolagus cuniculus (Rabbit).